The sequence spans 102 residues: Large ribosomal subunit protein uL24 (102 aa).

The protein belongs to the universal ribosomal protein uL24 family. As to quaternary structure, part of the 50S ribosomal subunit.

In terms of biological role, one of two assembly initiator proteins, it binds directly to the 5'-end of the 23S rRNA, where it nucleates assembly of the 50S subunit. One of the proteins that surrounds the polypeptide exit tunnel on the outside of the subunit. This chain is Large ribosomal subunit protein uL24, found in Polynucleobacter asymbioticus (strain DSM 18221 / CIP 109841 / QLW-P1DMWA-1) (Polynucleobacter necessarius subsp. asymbioticus).